The following is a 205-amino-acid chain: Peptidyl-tRNA hydrolase (205 aa).

Position 17 (Tyr-17) interacts with tRNA. His-22 acts as the Proton acceptor in catalysis. 2 residues coordinate tRNA: Tyr-73 and Asn-75.

This sequence belongs to the PTH family. Monomer.

Its subcellular location is the cytoplasm. It catalyses the reaction an N-acyl-L-alpha-aminoacyl-tRNA + H2O = an N-acyl-L-amino acid + a tRNA + H(+). Functionally, hydrolyzes ribosome-free peptidyl-tRNAs (with 1 or more amino acids incorporated), which drop off the ribosome during protein synthesis, or as a result of ribosome stalling. Its function is as follows. Catalyzes the release of premature peptidyl moieties from peptidyl-tRNA molecules trapped in stalled 50S ribosomal subunits, and thus maintains levels of free tRNAs and 50S ribosomes. This is Peptidyl-tRNA hydrolase from Maridesulfovibrio salexigens (strain ATCC 14822 / DSM 2638 / NCIMB 8403 / VKM B-1763) (Desulfovibrio salexigens).